Here is a 602-residue protein sequence, read N- to C-terminus: Threonine--tRNA ligase (602 aa).

Residues 208-499 are catalytic; sequence DHRKLGIELK…LTEHCAGEFP (292 aa). The Zn(2+) site is built by cysteine 300, histidine 351, and histidine 476.

The protein belongs to the class-II aminoacyl-tRNA synthetase family. Homodimer. The cofactor is Zn(2+).

It is found in the cytoplasm. It catalyses the reaction tRNA(Thr) + L-threonine + ATP = L-threonyl-tRNA(Thr) + AMP + diphosphate + H(+). In terms of biological role, catalyzes the attachment of threonine to tRNA(Thr) in a two-step reaction: L-threonine is first activated by ATP to form Thr-AMP and then transferred to the acceptor end of tRNA(Thr). Also edits incorrectly charged L-seryl-tRNA(Thr). The polypeptide is Threonine--tRNA ligase (Campylobacter jejuni subsp. doylei (strain ATCC BAA-1458 / RM4099 / 269.97)).